Consider the following 105-residue polypeptide: Imizoquin biosynthesis cluster protein I (105 aa).

A compositionally biased stretch (polar residues) spans 1–15 (MSSGEPTTMTPSPSE). Positions 1 to 43 (MSSGEPTTMTPSPSERTPLLSNGSGGAADDGGTTVTISKPNDG) are disordered.

It participates in secondary metabolite biosynthesis. Its function is as follows. Part of the gene cluster that mediates the biosynthesis of imizoquins A to D, tripeptide-derived alkaloids that serve a protective role against oxidative stress that are essential for normal germination. ImqB is a canonical three-module NRPS that assembles the tripeptide backbone of the imizoquins via condensation of Trp, Tyr, and Leu-derived precursors. N-methylation by imqF and phenol oxidation by imqC, followed by cyclization via the FAD-dependent oxidase imqH carry out the three-step transformation of L-tyrosine into tetrahydroisoquinoline. Importantly, this sequence requires the presence of a free amine in the tyrosine moiety, indicating that isoquinoline formation occurs prior to peptide bond formation. The imidazolidin-4-one ring of imizoquins could form following additional oxidation of the methyl-derived bridgehead carbon by imqH. Lastly, O-methylation by imqG and leucine hydroxylation by imqE complete biosynthesis of the imizoquins. The protein is Imizoquin biosynthesis cluster protein I of Aspergillus flavus (strain ATCC 200026 / FGSC A1120 / IAM 13836 / NRRL 3357 / JCM 12722 / SRRC 167).